The chain runs to 324 residues: tRNA U34 carboxymethyltransferase (324 aa).

Carboxy-S-adenosyl-L-methionine-binding positions include Lys-91, Trp-105, Lys-110, Gly-130, 152–154, 181–182, Met-196, Tyr-200, and Arg-315; these read DPS and IE.

This sequence belongs to the class I-like SAM-binding methyltransferase superfamily. CmoB family. In terms of assembly, homotetramer.

The enzyme catalyses carboxy-S-adenosyl-L-methionine + 5-hydroxyuridine(34) in tRNA = 5-carboxymethoxyuridine(34) in tRNA + S-adenosyl-L-homocysteine + H(+). Its function is as follows. Catalyzes carboxymethyl transfer from carboxy-S-adenosyl-L-methionine (Cx-SAM) to 5-hydroxyuridine (ho5U) to form 5-carboxymethoxyuridine (cmo5U) at position 34 in tRNAs. In Aliivibrio fischeri (strain ATCC 700601 / ES114) (Vibrio fischeri), this protein is tRNA U34 carboxymethyltransferase.